The primary structure comprises 368 residues: Protein-glutamate methylesterase/protein-glutamine glutaminase 2 (368 aa).

Residues 6 to 123 enclose the Response regulatory domain; it reads KVLLVDDSAV…KEYLESAAGE (118 aa). D57 bears the 4-aspartylphosphate mark. Positions 169 to 355 constitute a CheB-type methylesterase domain; sequence IAGANKIAAL…SLERIPQCVL (187 aa). Catalysis depends on residues S181, H207, and D303.

Belongs to the CheB family. Post-translationally, phosphorylated by CheA. Phosphorylation of the N-terminal regulatory domain activates the methylesterase activity.

It is found in the cytoplasm. It catalyses the reaction [protein]-L-glutamate 5-O-methyl ester + H2O = L-glutamyl-[protein] + methanol + H(+). The enzyme catalyses L-glutaminyl-[protein] + H2O = L-glutamyl-[protein] + NH4(+). Its function is as follows. Involved in chemotaxis. Part of a chemotaxis signal transduction system that modulates chemotaxis in response to various stimuli. Catalyzes the demethylation of specific methylglutamate residues introduced into the chemoreceptors (methyl-accepting chemotaxis proteins or MCP) by CheR. Also mediates the irreversible deamidation of specific glutamine residues to glutamic acid. The sequence is that of Protein-glutamate methylesterase/protein-glutamine glutaminase 2 from Hahella chejuensis (strain KCTC 2396).